The following is a 374-amino-acid chain: MEISYYEILEITQSADKETIKKAYRKMALKYHPDRNQGDKEAEDKFKLVNEAYEVLSNDEKRAIYDRYGKDALKGGGFGSSSSGFGGFEDLGDIFSSFFGEGFGSSSRRRKSSNDEKIPSDFIVNLKLSFKEAVFGCKKNIDFTYKCSCKTCNGTGAKDGKLQTCPKCQGRGQVGVSQGFITFAQTCPDCQGSGEKASEKCSDCKGLGYNESKDSVELNIPEGIDTGMKLRVNAKGNILKNGTRGDMYVKIIAAEDDTFVRDDDDIYIEFPVFFTQAILGQSIKVPTIRGEATLNLPKGAKDGQRFVLEKEGVKDVHSSRIGNQIVQISIKFPTSLNDEQKELLEKLSESFGIKDGMHQEQKGLFEKIANWFKS.

In terms of domain architecture, J spans 4–69 (SYYEILEITQ…EKRAIYDRYG (66 aa)). The segment at 136–213 (GCKKNIDFTY…CKGLGYNESK (78 aa)) adopts a CR-type zinc-finger fold. 8 residues coordinate Zn(2+): Cys149, Cys152, Cys165, Cys168, Cys187, Cys190, Cys201, and Cys204. 4 CXXCXGXG motif repeats span residues 149–156 (CKTCNGTG), 165–172 (CPKCQGRG), 187–194 (CPDCQGSG), and 201–208 (CSDCKGLG).

It belongs to the DnaJ family. In terms of assembly, homodimer. Zn(2+) is required as a cofactor.

The protein localises to the cytoplasm. Participates actively in the response to hyperosmotic and heat shock by preventing the aggregation of stress-denatured proteins and by disaggregating proteins, also in an autonomous, DnaK-independent fashion. Unfolded proteins bind initially to DnaJ; upon interaction with the DnaJ-bound protein, DnaK hydrolyzes its bound ATP, resulting in the formation of a stable complex. GrpE releases ADP from DnaK; ATP binding to DnaK triggers the release of the substrate protein, thus completing the reaction cycle. Several rounds of ATP-dependent interactions between DnaJ, DnaK and GrpE are required for fully efficient folding. Also involved, together with DnaK and GrpE, in the DNA replication of plasmids through activation of initiation proteins. In Campylobacter jejuni subsp. jejuni serotype O:6 (strain 81116 / NCTC 11828), this protein is Chaperone protein DnaJ.